A 1224-amino-acid chain; its full sequence is Coatomer subunit alpha (1224 aa).

WD repeat units follow at residues 7–37 (TKSA…QLWD), 49–79 (EHDG…KVWN), 91–121 (GHLD…RVWN), and 133–163 (GHNH…RVWD). A Phosphoserine modification is found at Ser-173. At Thr-185 the chain carries Phosphothreonine. WD repeat units lie at residues 203-233 (GHDR…KIWR) and 247-277 (GHYN…RVWD). Residue Thr-591 is modified to Phosphothreonine. Arg-965 carries the omega-N-methylarginine modification. Ser-1193 carries the phosphoserine modification.

Oligomeric complex that consists of at least the alpha, beta, beta', gamma, delta, epsilon and zeta subunits. Interacts with SCYL1. Interacts with JAGN1. Interacts with TMEM41B. Interacts with SVEP1. Probably interacts with PEX11A.

The protein resides in the cytoplasm. Its subcellular location is the golgi apparatus membrane. It is found in the cytoplasmic vesicle. The protein localises to the COPI-coated vesicle membrane. It localises to the secreted. In terms of biological role, the coatomer is a cytosolic protein complex that binds to dilysine motifs and reversibly associates with Golgi non-clathrin-coated vesicles, which further mediate biosynthetic protein transport from the ER, via the Golgi up to the trans Golgi network. Coatomer complex is required for budding from Golgi membranes, and is essential for the retrograde Golgi-to-ER transport of dilysine-tagged proteins. In mammals, the coatomer can only be recruited by membranes associated to ADP-ribosylation factors (ARFs), which are small GTP-binding proteins; the complex also influences the Golgi structural integrity, as well as the processing, activity, and endocytic recycling of LDL receptors. Its function is as follows. Xenin stimulates exocrine pancreatic secretion. It inhibits pentagastrin-stimulated secretion of acid, to induce exocrine pancreatic secretion and to affect small and large intestinal motility. In the gut, xenin interacts with the neurotensin receptor. The polypeptide is Coatomer subunit alpha (COPA) (Bos taurus (Bovine)).